The chain runs to 58 residues: UPF0434 protein Daro_3207 (58 aa).

The protein belongs to the UPF0434 family.

The protein is UPF0434 protein Daro_3207 of Dechloromonas aromatica (strain RCB).